We begin with the raw amino-acid sequence, 37 residues long: Photosystem II reaction center protein M (37 aa).

A helical membrane pass occupies residues 5–25; sequence ILAFIATALFILVPTAFLLII.

It belongs to the PsbM family. In terms of assembly, PSII is composed of 1 copy each of membrane proteins PsbA, PsbB, PsbC, PsbD, PsbE, PsbF, PsbH, PsbI, PsbJ, PsbK, PsbL, PsbM, PsbT, PsbX, PsbY, PsbZ, Psb30/Ycf12, at least 3 peripheral proteins of the oxygen-evolving complex and a large number of cofactors. It forms dimeric complexes.

The protein localises to the plastid. The protein resides in the chloroplast thylakoid membrane. Its function is as follows. One of the components of the core complex of photosystem II (PSII). PSII is a light-driven water:plastoquinone oxidoreductase that uses light energy to abstract electrons from H(2)O, generating O(2) and a proton gradient subsequently used for ATP formation. It consists of a core antenna complex that captures photons, and an electron transfer chain that converts photonic excitation into a charge separation. This subunit is found at the monomer-monomer interface. This is Photosystem II reaction center protein M from Pelargonium hortorum (Common geranium).